Reading from the N-terminus, the 438-residue chain is Adenylosuccinate synthetase (438 aa).

GTP is bound by residues 12-18 and 40-42; these read GDEGKGK and GHT. Asp-13 functions as the Proton acceptor in the catalytic mechanism. Positions 13 and 40 each coordinate Mg(2+). Residues 13–16, 38–41, Thr-128, Arg-142, Gln-223, Thr-238, and Arg-302 contribute to the IMP site; these read DEGK and NAGH. The active-site Proton donor is the His-41. 298-304 lines the substrate pocket; that stretch reads TTTGRPR. GTP contacts are provided by residues Arg-304, 330–332, and 412–414; these read KLD and GVG.

This sequence belongs to the adenylosuccinate synthetase family. As to quaternary structure, homodimer. Mg(2+) serves as cofactor.

The protein localises to the cytoplasm. It carries out the reaction IMP + L-aspartate + GTP = N(6)-(1,2-dicarboxyethyl)-AMP + GDP + phosphate + 2 H(+). It functions in the pathway purine metabolism; AMP biosynthesis via de novo pathway; AMP from IMP: step 1/2. Its function is as follows. Plays an important role in the de novo pathway of purine nucleotide biosynthesis. Catalyzes the first committed step in the biosynthesis of AMP from IMP. The sequence is that of Adenylosuccinate synthetase from Leifsonia xyli subsp. xyli (strain CTCB07).